A 220-amino-acid polypeptide reads, in one-letter code: Large ribosomal subunit protein eL15 (220 aa).

It belongs to the eukaryotic ribosomal protein eL15 family.

This Staphylothermus marinus (strain ATCC 43588 / DSM 3639 / JCM 9404 / F1) protein is Large ribosomal subunit protein eL15.